Consider the following 270-residue polypeptide: uncharacterized protein (270 aa).

The Cytoplasmic portion of the chain corresponds to 1-37 (MATHTSKRRIHRWENNELSEENSTIIYFPARGLMWTH). The chain crosses the membrane as a helical span at residues 38–58 (FPFVLGICLEFVGYVLKIVFI). At 59 to 65 (NSPSIST) the chain is on the extracellular side. Residues 66–86 (FIAQSVLLLIAPSLYALSIFM) traverse the membrane as a helical segment. Residues 87 to 93 (LFSKMAR) are Cytoplasmic-facing. A helical membrane pass occupies residues 94-114 (LILMEAYMLIPAKFSTVSFVV). Topologically, residues 115 to 140 (ADMIGRVLQAVGGGLLSSWNSRNTGR) are extracellular. Residues 141-161 (ILIIVGLFIQIFCYTFLTFSQ) form a helical membrane-spanning segment. Residues 162-181 (LFLHYKMKATPSKIVRDSNE) are Cytoplasmic-facing. Residues 182 to 202 (WFQYNFILLAGILLVNGRTIV) form a helical membrane-spanning segment. At 203–220 (RVVQFLMGLQSYIGQHEW) the chain is on the extracellular side. The helical transmembrane segment at 221 to 241 (CLYVFDTVLMFLLPLIFLATF) threads the bilayer. Residues 242–270 (RARNLFKLQDKSVNIQLNKLLDKESVSED) lie on the Cytoplasmic side of the membrane.

It belongs to the lipid-translocating exporter (LTE) (TC 9.A.26.1) family.

It is found in the membrane. This is an uncharacterized protein from Saccharomyces cerevisiae (strain ATCC 204508 / S288c) (Baker's yeast).